We begin with the raw amino-acid sequence, 198 residues long: HTH-type transcriptional regulator BetI (198 aa).

The 61-residue stretch at 8–68 (PLRRRELIDA…ATMRHLLREL (61 aa)) folds into the HTH tetR-type domain. The H-T-H motif DNA-binding region spans 31 to 50 (TVAQIAHEAGVSPALAHHYF).

It participates in amine and polyamine biosynthesis; betaine biosynthesis via choline pathway [regulation]. Its function is as follows. Repressor involved in the biosynthesis of the osmoprotectant glycine betaine. It represses transcription of the choline transporter BetT and the genes of BetAB involved in the synthesis of glycine betaine. This Brucella suis biovar 1 (strain 1330) protein is HTH-type transcriptional regulator BetI.